Here is a 524-residue protein sequence, read N- to C-terminus: Probable pectinesterase/pectinesterase inhibitor 42 (524 aa).

The N-terminal stretch at 1–22 (MLVKVFSFFILMITMVVIGVSK) is a signal peptide. The tract at residues 23 to 172 (EYCDDKHSCQ…ISKAKVALAL (150 aa)) is pectinesterase inhibitor 42. The pectinesterase 42 stretch occupies residues 215-510 (DVVVAKDGTG…FTVAKLLDGE (296 aa)). 2 N-linked (GlcNAc...) asparagine glycosylation sites follow: asparagine 265 and asparagine 281. Residue threonine 290 coordinates substrate. The Proton donor; for pectinesterase activity role is filled by aspartate 343. Cysteines 357 and 377 form a disulfide. Aspartate 364 (nucleophile; for pectinesterase activity) is an active-site residue. Asparagine 412 carries an N-linked (GlcNAc...) asparagine glycan. Residues arginine 430 and tryptophan 432 each coordinate substrate.

It in the N-terminal section; belongs to the PMEI family. In the C-terminal section; belongs to the pectinesterase family. Expressed in siliques but not in flower buds.

It localises to the secreted. The protein localises to the cell wall. It catalyses the reaction [(1-&gt;4)-alpha-D-galacturonosyl methyl ester](n) + n H2O = [(1-&gt;4)-alpha-D-galacturonosyl](n) + n methanol + n H(+). Its pathway is glycan metabolism; pectin degradation; 2-dehydro-3-deoxy-D-gluconate from pectin: step 1/5. Its function is as follows. Acts in the modification of cell walls via demethylesterification of cell wall pectin. This chain is Probable pectinesterase/pectinesterase inhibitor 42 (PME42), found in Arabidopsis thaliana (Mouse-ear cress).